We begin with the raw amino-acid sequence, 1071 residues long: DNA-directed RNA polymerase subunit beta (1071 aa).

The protein belongs to the RNA polymerase beta chain family. In terms of assembly, in plastids the minimal PEP RNA polymerase catalytic core is composed of four subunits: alpha, beta, beta', and beta''. When a (nuclear-encoded) sigma factor is associated with the core the holoenzyme is formed, which can initiate transcription.

The protein localises to the plastid. Its subcellular location is the chloroplast. It catalyses the reaction RNA(n) + a ribonucleoside 5'-triphosphate = RNA(n+1) + diphosphate. DNA-dependent RNA polymerase catalyzes the transcription of DNA into RNA using the four ribonucleoside triphosphates as substrates. The chain is DNA-directed RNA polymerase subunit beta from Anthoceros angustus (Hornwort).